The chain runs to 1433 residues: Regulatory protein CAT8 (1433 aa).

Residues 20-38 are compositionally biased toward polar residues; the sequence is GSQALSGPSISNRTSSSEA. A disordered region spans residues 20-40; sequence GSQALSGPSISNRTSSSEANP. The zn(2)-C6 fungal-type DNA-binding region spans 70–97; it reads CDRCRSKKTRCDGKRPQCSQCAAVGFEC. Polar residues predominate over residues 936–946; the sequence is KPLFGSQSKNS. Disordered regions lie at residues 936-1024, 1137-1162, 1200-1236, and 1324-1433; these read KPLF…DTKK, QNPE…NNLS, SASA…ILGS, and LNPT…QNAK. Composition is skewed to basic and acidic residues over residues 947–965 and 994–1005; these read LENR…EHEY and LKYEKDAKRNAK. Composition is skewed to polar residues over residues 1138–1162, 1221–1235, and 1326–1348; these read NPEN…NNLS, PPST…SILG, and PTDS…SNQR. Positions 1349-1362 are enriched in low complexity; sequence SLSSGNDSKGDSSS. Composition is skewed to polar residues over residues 1363–1391 and 1418–1433; these read QENS…SGPS and SNTD…QNAK.

In terms of processing, could be the target of the SNF1/CAT1 - SNF4/CAT3 kinase complex.

It is found in the nucleus. Its function is as follows. Activator of the gluconeogenic enzymes FBP1 and PCK1 genes. This chain is Regulatory protein CAT8 (CAT8), found in Saccharomyces cerevisiae (strain ATCC 204508 / S288c) (Baker's yeast).